Consider the following 445-residue polypeptide: 23S rRNA (uracil(1939)-C(5))-methyltransferase RlmD (445 aa).

Positions 1 to 21 (MARRRKQLPETPEPASIETLS) are disordered. The TRAM domain maps to 5–64 (RKQLPETPEPASIETLSHDGRGIARRDGKTTFIDNALPGEEVMFKFTYMRRKFDEGKAVE). [4Fe-4S] cluster is bound by residues Cys77, Cys83, Cys86, and Cys165. S-adenosyl-L-methionine is bound by residues Gln275, Phe304, Asn309, Glu325, Asp352, and Asp373. Cys399 functions as the Nucleophile in the catalytic mechanism.

It belongs to the class I-like SAM-binding methyltransferase superfamily. RNA M5U methyltransferase family. RlmD subfamily.

The enzyme catalyses uridine(1939) in 23S rRNA + S-adenosyl-L-methionine = 5-methyluridine(1939) in 23S rRNA + S-adenosyl-L-homocysteine + H(+). Functionally, catalyzes the formation of 5-methyl-uridine at position 1939 (m5U1939) in 23S rRNA. The protein is 23S rRNA (uracil(1939)-C(5))-methyltransferase RlmD of Alcanivorax borkumensis (strain ATCC 700651 / DSM 11573 / NCIMB 13689 / SK2).